We begin with the raw amino-acid sequence, 185 residues long: Anaphase-promoting complex subunit 10 (185 aa).

N-acetylthreonine is present on threonine 2. In terms of domain architecture, DOC spans 2–185 (TTPNKTPPGA…IDFMMYRSIR (184 aa)). The residue at position 169 (lysine 169) is an N6-acetyllysine.

It belongs to the APC10 family. As to quaternary structure, the mammalian APC/C is composed at least of 14 distinct subunits ANAPC1, ANAPC2, CDC27/APC3, ANAPC4, ANAPC5, CDC16/APC6, ANAPC7, CDC23/APC8, ANAPC10, ANAPC11, CDC26/APC12, ANAPC13, ANAPC15 and ANAPC16 that assemble into a complex of at least 19 chains with a combined molecular mass of around 1.2 MDa; APC/C interacts with FZR1 and FBXO5. The C-terminus of APC10 binds to CDC27/APC3. Interacts with PIWIL1; interaction only takes place when PIWIL1 binds piRNA. Interacts with FBXO43; the interaction is direct.

It participates in protein modification; protein ubiquitination. Functionally, component of the anaphase promoting complex/cyclosome (APC/C), a cell cycle-regulated E3 ubiquitin ligase that controls progression through mitosis and the G1 phase of the cell cycle. The APC/C complex acts by mediating ubiquitination and subsequent degradation of target proteins: it mainly mediates the formation of 'Lys-11'-linked polyubiquitin chains and, to a lower extent, the formation of 'Lys-48'- and 'Lys-63'-linked polyubiquitin chains. The APC/C complex catalyzes assembly of branched 'Lys-11'-/'Lys-48'-linked branched ubiquitin chains on target proteins. The polypeptide is Anaphase-promoting complex subunit 10 (Anapc10) (Mus musculus (Mouse)).